The chain runs to 294 residues: tRNA dimethylallyltransferase (294 aa).

An ATP-binding site is contributed by 10-17 (GPTAVGKT). Residue 12–17 (TAVGKT) coordinates substrate. The tract at residues 35 to 38 (DSQQ) is interaction with substrate tRNA.

This sequence belongs to the IPP transferase family. As to quaternary structure, monomer. Mg(2+) is required as a cofactor.

It catalyses the reaction adenosine(37) in tRNA + dimethylallyl diphosphate = N(6)-dimethylallyladenosine(37) in tRNA + diphosphate. In terms of biological role, catalyzes the transfer of a dimethylallyl group onto the adenine at position 37 in tRNAs that read codons beginning with uridine, leading to the formation of N6-(dimethylallyl)adenosine (i(6)A). This is tRNA dimethylallyltransferase from Streptococcus suis (strain 05ZYH33).